The chain runs to 542 residues: Quinidine resistance protein 2 (542 aa).

At 1–67 (MAGATSSIIR…SFKTVLIAQC (67 aa)) the chain is on the cytoplasmic side. Serine 21 carries the phosphoserine modification. Phosphothreonine is present on threonine 38. Serine 40 is subject to Phosphoserine. Residues 68–88 (AFTGFFSTIAGAIYYPVLSVI) form a helical membrane-spanning segment. Residues 89–100 (ERKFDIDEELVN) are Extracellular-facing. A helical membrane pass occupies residues 101-121 (VTVVVYFVFQGLAPTFMGGFA). The Cytoplasmic portion of the chain corresponds to 122–127 (DSLGRR). Residues 128-148 (PVVLVAIVIYFGACIGLACAQ) form a helical membrane-spanning segment. Threonine 149 is a topological domain (extracellular). Residues 150 to 170 (YAQIIVLRCLQAAGISPVIAI) form a helical membrane-spanning segment. The Cytoplasmic segment spans residues 171–187 (NSGIMGDVTTRAERGGY). A helical transmembrane segment spans residues 188 to 208 (VGYVAGFQVLGSAFGALIGAG). The Extracellular portion of the chain corresponds to 209–216 (LSSRWGWR). Residues 217–237 (AIFWFLAIGSGICFLASFLIL) form a helical membrane-spanning segment. Residues 238–300 (PETKRNISGN…APFKILKAYE (63 aa)) lie on the Cytoplasmic side of the membrane. A helical membrane pass occupies residues 301–321 (ICILMLVAGLQFAMYTTHLTA). Over 322–333 (LSTALSKQYHLT) the chain is Extracellular. A helical transmembrane segment spans residues 334 to 354 (VAKVGLCYLPSGICTLCSIVI). Residues 355–413 (AGRYLNWNYRRRLKYYQNWLGKKRSKLLEEHDNDLNLVQRIIENDPKYTFNIFKARLQP) are Cytoplasmic-facing. A helical membrane pass occupies residues 414-434 (AFVTLLLSSSGFCAYGWCITV). Over 435–437 (KAP) the chain is Extracellular. Residues 438-458 (LAAVLCMSGFASLFSNCILTF) form a helical membrane-spanning segment. Topologically, residues 459–472 (STTLIVDLFPTKTS) are cytoplasmic. The helical transmembrane segment at 473-493 (TATGCLNLFRCILSAVFIAAL) threads the bilayer. Residues 494–503 (SKMVEKMKFG) are Extracellular-facing. The chain crosses the membrane as a helical span at residues 504-524 (GVFTFLGALTSSSSILLFILL). The Cytoplasmic segment spans residues 525–542 (RKGKELAFKRKKQELGVN).

Belongs to the major facilitator superfamily. CAR1 family.

The protein resides in the cell membrane. In terms of biological role, multidrug resistance transporter involved in resistance and adaptation to quinidine and to the herbicide barban (4-chloro-2-butynyl [3-chlorophenyl] carbamate). Implicated in potassium uptake. This chain is Quinidine resistance protein 2 (QDR2), found in Saccharomyces cerevisiae (strain ATCC 204508 / S288c) (Baker's yeast).